A 301-amino-acid polypeptide reads, in one-letter code: GTP cyclohydrolase FolE2 (301 aa).

It belongs to the GTP cyclohydrolase IV family.

It carries out the reaction GTP + H2O = 7,8-dihydroneopterin 3'-triphosphate + formate + H(+). It participates in cofactor biosynthesis; 7,8-dihydroneopterin triphosphate biosynthesis; 7,8-dihydroneopterin triphosphate from GTP: step 1/1. Converts GTP to 7,8-dihydroneopterin triphosphate. This is GTP cyclohydrolase FolE2 from Exiguobacterium sibiricum (strain DSM 17290 / CCUG 55495 / CIP 109462 / JCM 13490 / 255-15).